The primary structure comprises 301 residues: Acetylglutamate kinase (301 aa).

Residues 68–69 (GG), arginine 90, and asparagine 195 contribute to the substrate site.

This sequence belongs to the acetylglutamate kinase family. ArgB subfamily.

The protein resides in the cytoplasm. It catalyses the reaction N-acetyl-L-glutamate + ATP = N-acetyl-L-glutamyl 5-phosphate + ADP. It participates in amino-acid biosynthesis; L-arginine biosynthesis; N(2)-acetyl-L-ornithine from L-glutamate: step 2/4. Functionally, catalyzes the ATP-dependent phosphorylation of N-acetyl-L-glutamate. This chain is Acetylglutamate kinase, found in Pseudomonas fluorescens (strain Pf0-1).